A 335-amino-acid polypeptide reads, in one-letter code: MKNMEQIDFVVTWVNDKDVDWCKRKSEFEKEYNIFQDLNSEERYREWGLMKYWFRAVEKYAPWVNKIYFITEGHVPNWLDVNHPKLVHVKHEDYIEKQFLPTFNSNVIEMNLIHLKDLSEKFVLFNDDFFINDFVKQSDFFENNLPKDTGIFSPLIPRENSLTPIILNNMEIINKYFSKKKILEQNFSKFFNIKYGKHLLKNICLLPWSDLLGFYDNHIPVSYCKSNFLEVYEKEHAIFNLTFKNKFRNKNEINHWLIRYWQLSSGNFIPRNINFGKNYAISNDPTDIINELKLSKYKIICINDGESIDNFDAVKGLMINAFEKKFPEKSSFEKK.

It belongs to the stealth family.

The sequence is that of Capsular polysaccharide phosphotransferase WcwK (wcwK) from Streptococcus pneumoniae.